A 542-amino-acid chain; its full sequence is CTP synthase (542 aa).

Positions 1 to 265 are amidoligase domain; the sequence is MTKFVFVTGG…DEIVCHKLNL (265 aa). Serine 13 serves as a coordination point for CTP. Residue serine 13 participates in UTP binding. ATP contacts are provided by residues 14 to 19 and aspartate 71; that span reads SLGKGI. The Mg(2+) site is built by aspartate 71 and glutamate 139. CTP contacts are provided by residues 146–148, 186–191, and lysine 222; these read DIE and KTKPTQ. UTP-binding positions include 186–191 and lysine 222; that span reads KTKPTQ. Positions 290–542 constitute a Glutamine amidotransferase type-1 domain; the sequence is NVAFVGKYVD…IAAALANRKA (253 aa). Residue glycine 351 coordinates L-glutamine. Cysteine 378 (nucleophile; for glutamine hydrolysis) is an active-site residue. L-glutamine-binding positions include 379-382, glutamate 402, and arginine 468; that span reads LGMQ. Residues histidine 515 and glutamate 517 contribute to the active site.

The protein belongs to the CTP synthase family. In terms of assembly, homotetramer.

The enzyme catalyses UTP + L-glutamine + ATP + H2O = CTP + L-glutamate + ADP + phosphate + 2 H(+). It carries out the reaction L-glutamine + H2O = L-glutamate + NH4(+). It catalyses the reaction UTP + NH4(+) + ATP = CTP + ADP + phosphate + 2 H(+). It participates in pyrimidine metabolism; CTP biosynthesis via de novo pathway; CTP from UDP: step 2/2. Allosterically activated by GTP, when glutamine is the substrate; GTP has no effect on the reaction when ammonia is the substrate. The allosteric effector GTP functions by stabilizing the protein conformation that binds the tetrahedral intermediate(s) formed during glutamine hydrolysis. Inhibited by the product CTP, via allosteric rather than competitive inhibition. Its function is as follows. Catalyzes the ATP-dependent amination of UTP to CTP with either L-glutamine or ammonia as the source of nitrogen. Regulates intracellular CTP levels through interactions with the four ribonucleotide triphosphates. The polypeptide is CTP synthase (Methylobacillus flagellatus (strain ATCC 51484 / DSM 6875 / VKM B-1610 / KT)).